We begin with the raw amino-acid sequence, 334 residues long: Phosphate acyltransferase (334 aa).

It belongs to the PlsX family. Homodimer. Probably interacts with PlsY.

It localises to the cytoplasm. The catalysed reaction is a fatty acyl-[ACP] + phosphate = an acyl phosphate + holo-[ACP]. It functions in the pathway lipid metabolism; phospholipid metabolism. In terms of biological role, catalyzes the reversible formation of acyl-phosphate (acyl-PO(4)) from acyl-[acyl-carrier-protein] (acyl-ACP). This enzyme utilizes acyl-ACP as fatty acyl donor, but not acyl-CoA. The chain is Phosphate acyltransferase from Clostridium tetani (strain Massachusetts / E88).